Here is an 804-residue protein sequence, read N- to C-terminus: Phenylalanine--tRNA ligase beta subunit (804 aa).

In terms of domain architecture, tRNA-binding spans 39 to 155 (EEGLKKLVVG…ADVKPGQDVY (117 aa)). Positions 408 to 483 (REPVVVKTTV…RIYGYDNLKS (76 aa)) constitute a B5 domain. Residues Asp-461, Asp-467, Glu-470, and Glu-471 each contribute to the Mg(2+) site. The region spanning 711 to 804 (PKFPAIERDL…LENDLDIKVR (94 aa)) is the FDX-ACB domain.

This sequence belongs to the phenylalanyl-tRNA synthetase beta subunit family. Type 1 subfamily. As to quaternary structure, tetramer of two alpha and two beta subunits. The cofactor is Mg(2+).

The protein localises to the cytoplasm. The catalysed reaction is tRNA(Phe) + L-phenylalanine + ATP = L-phenylalanyl-tRNA(Phe) + AMP + diphosphate + H(+). This chain is Phenylalanine--tRNA ligase beta subunit, found in Lactobacillus acidophilus (strain ATCC 700396 / NCK56 / N2 / NCFM).